The primary structure comprises 349 residues: Probable inactive tRNA-specific adenosine deaminase-like protein 3 (349 aa).

M1 carries the post-translational modification N-acetylmethionine. The disordered stretch occupies residues 1–25 (MEPTSGFAEQPGPEKVESEEQEPAQ). Positions 171–334 (AAMQTHMERA…PDLNHRFQVF (164 aa)) constitute a CMP/dCMP-type deaminase domain. Zn(2+)-binding residues include H223, C289, and C292.

Belongs to the cytidine and deoxycytidylate deaminase family. ADAT3 subfamily. It depends on Zn(2+) as a cofactor.

The sequence is that of Probable inactive tRNA-specific adenosine deaminase-like protein 3 (Adat3) from Rattus norvegicus (Rat).